Here is a 467-residue protein sequence, read N- to C-terminus: ATP synthase subunit beta 1 (467 aa).

ATP is bound at residue Gly-150–Thr-157.

It belongs to the ATPase alpha/beta chains family. F-type ATPases have 2 components, CF(1) - the catalytic core - and CF(0) - the membrane proton channel. CF(1) has five subunits: alpha(3), beta(3), gamma(1), delta(1), epsilon(1). CF(0) has three main subunits: a(1), b(2) and c(9-12). The alpha and beta chains form an alternating ring which encloses part of the gamma chain. CF(1) is attached to CF(0) by a central stalk formed by the gamma and epsilon chains, while a peripheral stalk is formed by the delta and b chains.

The protein resides in the cell inner membrane. It catalyses the reaction ATP + H2O + 4 H(+)(in) = ADP + phosphate + 5 H(+)(out). Its function is as follows. Produces ATP from ADP in the presence of a proton gradient across the membrane. The catalytic sites are hosted primarily by the beta subunits. The chain is ATP synthase subunit beta 1 from Vibrio campbellii (strain ATCC BAA-1116).